A 689-amino-acid chain; its full sequence is Zinc finger protein 185 (689 aa).

2 disordered regions span residues M1 to K253 and A298 to S534. Residues L35–T52 are compositionally biased toward basic and acidic residues. S66 bears the Phosphoserine mark. Positions I95–S114 are enriched in polar residues. A Phosphoserine modification is found at S153. Positions D157–V166 are enriched in acidic residues. P206 is subject to Phosphoserine. Basic and acidic residues-rich tracts occupy residues K217–Q232 and N310–F331. Positions A338–N349 are enriched in polar residues. Composition is skewed to low complexity over residues S373–V382 and D434–D444. Phosphothreonine is present on T447. Residues P448–E458 are compositionally biased toward polar residues. 2 positions are modified to phosphoserine: S453 and S465. The segment covering P504–E524 has biased composition (polar residues). The LIM zinc-binding domain maps to G627 to F689.

Expressed in placenta, pancreas and kidney. Also expressed in prostate, testis, ovary and blood.

Its subcellular location is the cytoplasm. It is found in the cytoskeleton. The protein resides in the cell junction. It localises to the focal adhesion. In terms of biological role, may be involved in the regulation of cellular proliferation and/or differentiation. This Homo sapiens (Human) protein is Zinc finger protein 185 (ZNF185).